Consider the following 361-residue polypeptide: MKKTLAALIVGAFAASAANAAVVYNNEGTNVELGGRLSVIAEQSNSTRKDQKQQHGELRNAGSHFHIKATHNFGDGFYAQGYLETRLVSDYQSSSDNFGNIITKYAYVTLGNKGFGEVKLGRAKTIADGITSAEDKEYGVLENKEYIPKDGNSVGYTFKGIDGLVLGANYLLAQKREAYKTDAATPGEVIAQAISNGVQVGAKYDANNIIAGIAYGRTNYREDLAELGNKSGKKQQVNGALSTLGYRFSDLGLLVSLDSGYAKTKNYKDKHEKRYFVSPGFQYELMEDTNVYGNFKYERNSVDQGKKAREHAVLFGVDHKLHKQVLTYIEGAYARTRTNDKDKTEKTEKEKSVGVGLRVYF.

Residues 1-20 (MKKTLAALIVGAFAASAANA) form the signal peptide.

Belongs to the Gram-negative porin family. In terms of assembly, homotrimer.

It is found in the cell outer membrane. Functionally, forms pores that allow passive diffusion of small molecules across the outer membrane. The chain is Outer membrane protein P2 (ompP2) from Haemophilus influenzae.